The chain runs to 409 residues: Palmitoyltransferase ZDHHC23 (409 aa).

Residues 1–87 (MTQKGSMKPV…RIPWLRGAKK (87 aa)) lie on the Cytoplasmic side of the membrane. A helical membrane pass occupies residues 88–106 (VNISIIPPLVLLPVFLHVA). The Lumenal portion of the chain corresponds to 107–109 (SWH). The helical transmembrane segment at 110 to 132 (FLLGVVVLTSLPVLALWYYYLTH) threads the bilayer. The Cytoplasmic segment spans residues 133 to 136 (RRKE). A helical membrane pass occupies residues 137 to 157 (QTLFFLSLGLFSLGYMYYVFL). Topologically, residues 158–165 (QEVVPKGR) are lumenal. Residues 166–186 (VGPVQLAVLTCGLFLILLALH) traverse the membrane as a helical segment. Over 187-302 (RAKKNPGYLS…NSCVGESNHQ (116 aa)) the chain is Cytoplasmic. Residues 215–255 (RKGQEKTKGFPGADMSGSLNNRTTKDDPKGSSKMPAGSPTK) form a disordered region. Positions 259–309 (DWCAKCQLVRPARAWHCRICGICVRRMDHHCVWINSCVGESNHQAFILALL) constitute a DHHC domain. The active-site S-palmitoyl cysteine intermediate is C289. Residues 303–323 (AFILALLIFLLTSVYGITLTL) traverse the membrane as a helical segment. The Lumenal portion of the chain corresponds to 324-331 (DTICRDRS). The chain crosses the membrane as a helical span at residues 332 to 352 (VFTALFYCPGVYANYSSALSF). T353 is a topological domain (cytoplasmic). The helical transmembrane segment at 354 to 374 (CVWYSVIITAGMAYIFLIQLI) threads the bilayer. Topologically, residues 375 to 409 (NISYNVTEREVQQALRQKTGRRLLCGLIVDTGLLG) are lumenal.

Belongs to the DHHC palmitoyltransferase family. In terms of assembly, interacts with NOS1.

It is found in the golgi apparatus membrane. Its subcellular location is the golgi apparatus. It localises to the trans-Golgi network membrane. It catalyses the reaction L-cysteinyl-[protein] + hexadecanoyl-CoA = S-hexadecanoyl-L-cysteinyl-[protein] + CoA. In terms of biological role, palmitoyltransferase that could catalyze the addition of palmitate onto various protein substrates and be involved in a variety of cellular processes. Palmitoyltransferase that mediates palmitoylation of KCNMA1, regulating localization of KCNMA1 to the plasma membrane. May be involved in NOS1 regulation and targeting to the synaptic membrane. The protein is Palmitoyltransferase ZDHHC23 of Homo sapiens (Human).